A 436-amino-acid polypeptide reads, in one-letter code: Cysteine--tRNA ligase (436 aa).

Cys24 provides a ligand contact to Zn(2+). The 'HIGH' region signature appears at 26–36 (PTVYNHIHIGN). Residues Cys202, His227, and Glu231 each coordinate Zn(2+). Positions 259–263 (KMSKS) match the 'KMSKS' region motif. An ATP-binding site is contributed by Lys262.

It belongs to the class-I aminoacyl-tRNA synthetase family. Monomer. It depends on Zn(2+) as a cofactor.

It is found in the cytoplasm. It catalyses the reaction tRNA(Cys) + L-cysteine + ATP = L-cysteinyl-tRNA(Cys) + AMP + diphosphate. The sequence is that of Cysteine--tRNA ligase from Ureaplasma parvum serovar 3 (strain ATCC 700970).